Reading from the N-terminus, the 293-residue chain is Protein bcp-1 (293 aa).

Positions 1–12 are enriched in basic and acidic residues; sequence MGKKRSREEAQK. Positions 1–35 are disordered; the sequence is MGKKRSREEAQKEVVQNDPTVDKMDEDSDSSDSDE. The segment covering 24-35 has biased composition (acidic residues); it reads MDEDSDSSDSDE.

It belongs to the BCP1 family.

It localises to the cytoplasm. It is found in the nucleus. In terms of biological role, involved in nuclear export, actin cytoskeleton organization and vesicular transport. This chain is Protein bcp-1 (bcp-1), found in Neurospora crassa (strain ATCC 24698 / 74-OR23-1A / CBS 708.71 / DSM 1257 / FGSC 987).